A 101-amino-acid chain; its full sequence is NAD(P)H-quinone oxidoreductase subunit 4L, chloroplastic (101 aa).

3 helical membrane-spanning segments follow: residues 2–22 (LLEH…YGLI), 32–52 (MCLE…SDFF), and 61–81 (IFSI…SAIV).

It belongs to the complex I subunit 4L family. In terms of assembly, NDH is composed of at least 16 different subunits, 5 of which are encoded in the nucleus.

It localises to the plastid. The protein localises to the chloroplast thylakoid membrane. It catalyses the reaction a plastoquinone + NADH + (n+1) H(+)(in) = a plastoquinol + NAD(+) + n H(+)(out). It carries out the reaction a plastoquinone + NADPH + (n+1) H(+)(in) = a plastoquinol + NADP(+) + n H(+)(out). Functionally, NDH shuttles electrons from NAD(P)H:plastoquinone, via FMN and iron-sulfur (Fe-S) centers, to quinones in the photosynthetic chain and possibly in a chloroplast respiratory chain. The immediate electron acceptor for the enzyme in this species is believed to be plastoquinone. Couples the redox reaction to proton translocation, and thus conserves the redox energy in a proton gradient. In Carica papaya (Papaya), this protein is NAD(P)H-quinone oxidoreductase subunit 4L, chloroplastic.